The chain runs to 350 residues: Phosphotriesterase-related protein (350 aa).

A divalent metal cation-binding residues include His-22, His-24, Glu-169, His-201, His-230, and Asp-298.

This sequence belongs to the metallo-dependent hydrolases superfamily. Phosphotriesterase family. A divalent metal cation serves as cofactor.

The chain is Phosphotriesterase-related protein from Drosophila grimshawi (Hawaiian fruit fly).